The sequence spans 124 residues: Urotensin-2 (124 aa).

Positions 1–20 (MYKLASCCLLFIGFLNPLLS) are cleaved as a signal peptide. Positions 21–110 (LPLLDSREIS…HLLARIWKPY (90 aa)) are excised as a propeptide. C118 and C123 form a disulfide bridge.

The protein belongs to the urotensin-2 family. As to expression, brain specific.

It localises to the secreted. In terms of biological role, highly potent vasoconstrictor. The polypeptide is Urotensin-2 (UTS2) (Homo sapiens (Human)).